The primary structure comprises 485 residues: NADH-quinone oxidoreductase subunit N (485 aa).

A run of 14 helical transmembrane segments spans residues 8–28, 35–55, 71–91, 105–125, 127–147, 159–179, 203–223, 235–255, 271–291, 297–317, 326–346, 373–393, 408–430, and 455–475; these read LIAL…MLSI, FLNA…LWFV, GFAM…CTFA, FYLL…ANHL, ALFL…GYAF, YTIL…LVYA, LLAG…LVPF, PAPV…GVVM, VVLG…ALSQ, LLGY…IALQ, VGVY…VVSL, AAVM…LGFI, WWLV…RVAV, and IVVL…QPLI.

Belongs to the complex I subunit 2 family. NDH-1 is composed of 13 different subunits. Subunits NuoA, H, J, K, L, M, N constitute the membrane sector of the complex.

The protein localises to the cell inner membrane. The enzyme catalyses a quinone + NADH + 5 H(+)(in) = a quinol + NAD(+) + 4 H(+)(out). In terms of biological role, NDH-1 shuttles electrons from NADH, via FMN and iron-sulfur (Fe-S) centers, to quinones in the respiratory chain. The immediate electron acceptor for the enzyme in this species is believed to be ubiquinone. Couples the redox reaction to proton translocation (for every two electrons transferred, four hydrogen ions are translocated across the cytoplasmic membrane), and thus conserves the redox energy in a proton gradient. The polypeptide is NADH-quinone oxidoreductase subunit N (Salmonella arizonae (strain ATCC BAA-731 / CDC346-86 / RSK2980)).